We begin with the raw amino-acid sequence, 424 residues long: uncharacterized protein (424 aa).

This sequence belongs to the serpin family.

This is an uncharacterized protein from Methanosarcina acetivorans (strain ATCC 35395 / DSM 2834 / JCM 12185 / C2A).